A 646-amino-acid chain; its full sequence is Type I inositol polyphosphate 5-phosphatase 2 (646 aa).

Residues 59 to 74 (TDEDSHNGRRGSEADH) are compositionally biased toward basic and acidic residues. Disordered stretches follow at residues 59 to 99 (TDED…GKSE), 185 to 207 (ESVY…SAPS), and 329 to 369 (IDNR…IRNS). The segment covering 188–207 (YDQSPSCNNNALHRSHSAPS) has biased composition (polar residues). The segment covering 341-350 (EAAKIMHDDS) has biased composition (basic and acidic residues). 2 catalytic regions span residues 495-510 (DQVF…LNMS) and 575-590 (KKRA…WLGK).

The protein belongs to the inositol polyphosphate 5-phosphatase family. In terms of tissue distribution, expressed ubiquitously.

The catalysed reaction is 1D-myo-inositol 1,4,5-trisphosphate + H2O = 1D-myo-inositol 1,4-bisphosphate + phosphate. It carries out the reaction 1D-myo-inositol 1,3,4,5-tetrakisphosphate + H2O = 1D-myo-inositol 1,3,4-trisphosphate + phosphate. Has phosphatase activity toward Ins(1,4,5)P3 and Ins(1,3,4,5)P4. Seems to be involved in the abscisic acid (ABA) signaling pathway. Could also be able to hydrolyze PtdIns(4,5)P2 and PtdIns(3,4,5)P3. The polypeptide is Type I inositol polyphosphate 5-phosphatase 2 (Arabidopsis thaliana (Mouse-ear cress)).